We begin with the raw amino-acid sequence, 417 residues long: Secreted aspartic protease 4 (417 aa).

Residues M1–A18 form the signal peptide. Positions A19–R75 are cleaved as a propeptide — activation peptide. Residues Y89–A403 enclose the Peptidase A1 domain. D107 is an active-site residue. Residue D107 to G109 coordinates pepstatin A. C122 and C134 are oxidised to a cystine. Residue N137 is glycosylated (N-linked (GlcNAc...) asparagine). A160–D161 is a pepstatin A binding site. D267 is a binding site for Zn(2+). D293 is a catalytic residue. D293–T297 lines the pepstatin A pocket. The cysteines at positions 331 and 369 are disulfide-linked.

This sequence belongs to the peptidase A1 family. As to quaternary structure, monomer.

It localises to the secreted. The enzyme catalyses Preferential cleavage at the carboxyl of hydrophobic amino acids, but fails to cleave 15-Leu-|-Tyr-16, 16-Tyr-|-Leu-17 and 24-Phe-|-Phe-25 of insulin B chain. Activates trypsinogen, and degrades keratin.. With respect to regulation, activity is inhibited by squash aspartic peptidase inhibitor (SQAPI). Its function is as follows. Secreted aspartic peptidases (SAPs) are a group of ten acidic hydrolases considered as key virulence factors. These enzymes supply the fungus with nutrient amino acids as well as are able to degrade the selected host's proteins involved in the immune defense. Moreover, acts toward human hemoglobin though limited proteolysis to generate a variety of antimicrobial hemocidins, enabling to compete with the other microorganisms of the same physiological niche using the microbicidal peptides generated from the host protein. Functionally, plays a key role in defense against host by cleaving histatin-5 (Hst 5), a peptide from human saliva that carries out fungicidal activity. The cleavage rate decreases in an order of SAP2 &gt; SAP9 &gt; SAP3 &gt; SAP7 &gt; SAP4 &gt; SAP1 &gt; SAP8. The first cleavage occurs between residues 'Lys-17' and 'His-18' of Hst 5, giving DSHAKRHHGYKRKFHEK and HHSHRGY peptides. Simultaneously, the DSHAKRHHGY and KRKFHEKHHSHRGY peptides are also formed. The protein is Secreted aspartic protease 4 of Candida albicans (strain SC5314 / ATCC MYA-2876) (Yeast).